The primary structure comprises 990 residues: TonB-dependent receptor P26 (990 aa).

The TonB box motif lies at 86–93 (DEVVVIGY). One can recognise a TBDR plug domain in the interval 97–213 (RKSDLTGSVS…ANGVVLVTTK (117 aa)). The 771-residue stretch at 220–990 (SSKPEVSANI…TITLGLNVTF (771 aa)) folds into the TBDR beta-barrel domain. Residues 878-902 (TPENPTSDIPRAGGDSVTGTPPNSA) are disordered. Positions 974 to 990 (GSYPNPRTITLGLNVTF) match the TonB C-terminal box motif.

The protein belongs to the TonB-dependent receptor family.

The protein localises to the cell outer membrane. Its function is as follows. TonB-dependent receptor probably involved in ulvan degradation. Ulvan is the main polysaccharide component of the Ulvales (green seaweed) cell wall. It is composed of disaccharide building blocks comprising 3-sulfated rhamnose (Rha3S) linked to D-glucuronic acid (GlcA), L-iduronic acid (IduA), or D-xylose (Xyl). The TonB-dependent receptor may mediate transport of ulvan oligosaccharides from the surface of the outer membrane to the periplasm for subsequent degradation. This chain is TonB-dependent receptor P26, found in Formosa agariphila (strain DSM 15362 / KCTC 12365 / LMG 23005 / KMM 3901 / M-2Alg 35-1).